Here is a 98-residue protein sequence, read N- to C-terminus: Cystatin-B (98 aa).

M1 is subject to N-acetylmethionine. The Secondary area of contact signature appears at 46–50 (QLVAG).

It belongs to the cystatin family. Able to form dimers stabilized by noncovalent forces.

Its subcellular location is the cytoplasm. This is an intracellular thiol proteinase inhibitor. This is Cystatin-B (CSTB) from Bos taurus (Bovine).